The sequence spans 415 residues: UDP-N-acetylmuramoylalanine--D-glutamate ligase (415 aa).

91–97 (GTDGKST) is a binding site for ATP.

It belongs to the MurCDEF family.

It localises to the cytoplasm. The catalysed reaction is UDP-N-acetyl-alpha-D-muramoyl-L-alanine + D-glutamate + ATP = UDP-N-acetyl-alpha-D-muramoyl-L-alanyl-D-glutamate + ADP + phosphate + H(+). Its pathway is cell wall biogenesis; peptidoglycan biosynthesis. Cell wall formation. Catalyzes the addition of glutamate to the nucleotide precursor UDP-N-acetylmuramoyl-L-alanine (UMA). This is UDP-N-acetylmuramoylalanine--D-glutamate ligase from Aquifex aeolicus (strain VF5).